We begin with the raw amino-acid sequence, 390 residues long: Uroporphyrinogen decarboxylase 2, chloroplastic (390 aa).

Residues 1 to 30 constitute a chloroplast transit peptide; sequence MATACPPLSLQPAYLSGRSARARRPPPAVR. Substrate contacts are provided by residues 70-74, F89, S119, D120, Y197, S252, and H367; that span reads RQAGR.

This sequence belongs to the uroporphyrinogen decarboxylase family. Homodimer.

Its subcellular location is the plastid. It is found in the chloroplast. It catalyses the reaction uroporphyrinogen III + 4 H(+) = coproporphyrinogen III + 4 CO2. It functions in the pathway porphyrin-containing compound metabolism; protoporphyrin-IX biosynthesis; coproporphyrinogen-III from 5-aminolevulinate: step 4/4. Functionally, catalyzes the decarboxylation of four acetate groups of uroporphyrinogen-III to yield coproporphyrinogen-III. The polypeptide is Uroporphyrinogen decarboxylase 2, chloroplastic (Oryza sativa subsp. japonica (Rice)).